We begin with the raw amino-acid sequence, 89 residues long: Heat shock protein 30A (89 aa).

Basic and acidic residues-rich tracts occupy residues 1–11 (MRNNVERRMQR) and 19–39 (LSKD…RESE). Residues 1-55 (MRNNVERRMQRVNEACRLLSKDTEMRRITDQNRQSRESEGTSPNSGKDGKDHFEL) are disordered. A sHSP domain is found at 35 to 89 (SRESEGTSPNSGKDGKDHFELTLNVRDFSPHELTVKTQGRRVIVTGKHERKSDTE).

Belongs to the small heat shock protein (HSP20) family.

In Xenopus laevis (African clawed frog), this protein is Heat shock protein 30A (hsp30a).